The chain runs to 253 residues: MFYIIGVGPAPGFITEKAAQILREADCVFYEDYTGPIDVETLRRYARSPPTRLTRRDLEDESGRRVLECLSRGKTAVLATAGDPMLATSHAALISIARSRGYSVEVVPGVSIVCAAFSASCLSIYKLGGVATVTYPRGGVYSARPYELVEQNLARGLHTLLLLDVREDGVFMPPRDAAEIMLKLEEREKRGVFDKGRPVVVVPKLGWGGRPAYLPLGELLGSDLEGPAVFIVPGGLSPVERECIEALSVLKSR.

S-adenosyl-L-methionine is bound by residues Asp83, Leu86, 111 to 112 (SI), Leu163, and Leu205.

It belongs to the diphthine synthase family. Homodimer.

The enzyme catalyses 2-[(3S)-amino-3-carboxypropyl]-L-histidyl-[translation elongation factor 2] + 3 S-adenosyl-L-methionine = diphthine-[translation elongation factor 2] + 3 S-adenosyl-L-homocysteine + 3 H(+). Its pathway is protein modification; peptidyl-diphthamide biosynthesis. Its function is as follows. S-adenosyl-L-methionine-dependent methyltransferase that catalyzes the trimethylation of the amino group of the modified target histidine residue in translation elongation factor 2 (EF-2), to form an intermediate called diphthine. The three successive methylation reactions represent the second step of diphthamide biosynthesis. This Pyrobaculum neutrophilum (strain DSM 2338 / JCM 9278 / NBRC 100436 / V24Sta) (Thermoproteus neutrophilus) protein is Diphthine synthase.